The sequence spans 175 residues: Cytidylate kinase (175 aa).

7–15 (GQPGSGKTS) is a binding site for ATP.

It belongs to the cytidylate kinase family. Type 2 subfamily.

It localises to the cytoplasm. It catalyses the reaction CMP + ATP = CDP + ADP. The enzyme catalyses dCMP + ATP = dCDP + ADP. The polypeptide is Cytidylate kinase (Methanocella arvoryzae (strain DSM 22066 / NBRC 105507 / MRE50)).